The chain runs to 188 residues: Elongation factor P (188 aa).

Belongs to the elongation factor P family.

The protein resides in the cytoplasm. It participates in protein biosynthesis; polypeptide chain elongation. Its function is as follows. Involved in peptide bond synthesis. Stimulates efficient translation and peptide-bond synthesis on native or reconstituted 70S ribosomes in vitro. Probably functions indirectly by altering the affinity of the ribosome for aminoacyl-tRNA, thus increasing their reactivity as acceptors for peptidyl transferase. The protein is Elongation factor P of Acidiphilium cryptum (strain JF-5).